We begin with the raw amino-acid sequence, 336 residues long: Foldase protein PrsA (336 aa).

Positions 1-22 (MKSAKKLLSVLCLGIFILTFTA) are cleaved as a signal peptide. Residue Cys-23 is the site of N-palmitoyl cysteine attachment. A lipid anchor (S-diacylglycerol cysteine) is attached at Cys-23. The 93-residue stretch at 194–286 (PNTMNVSHIL…FGYHIIKINS (93 aa)) folds into the PpiC domain.

Belongs to the PrsA family.

The protein localises to the cell membrane. It carries out the reaction [protein]-peptidylproline (omega=180) = [protein]-peptidylproline (omega=0). In terms of biological role, plays a major role in protein secretion by helping the post-translocational extracellular folding of several secreted proteins. This is Foldase protein PrsA from Clostridium botulinum (strain Kyoto / Type A2).